Reading from the N-terminus, the 661-residue chain is Arginine--tRNA ligase, cytoplasmic (661 aa).

Met1 is modified (N-acetylmethionine). Residues 1–73 (MDGLVAQCSA…AEKRRRPTKN (73 aa)) form a could be involved in the assembly of the multisynthetase complex region. L-arginine contacts are provided by residues 201-203 (SPN), His212, Tyr385, Asp389, and Gln413. The 'HIGH' region signature appears at 202-213 (PNIAKEMHVGHL). The interval 530–544 (NTAAYLLYAFTRIRS) is interaction with tRNA.

Belongs to the class-I aminoacyl-tRNA synthetase family. As to quaternary structure, interacts (via N-terminus) with AIMP1 (via N-terminus); this stimulates its catalytic activity. Interacts (via N-terminus) with LARS2 (via C-terminus). Monomer. Part of a multisubunit complex that groups tRNA ligases for Arg (RARS1), Asp (DARS1), Gln (QARS1), Ile (IARS1), Leu (LARS1), Lys (KARS1), Met (MARS1) the bifunctional ligase for Glu and Pro (EPRS1) and the auxiliary subunits AIMP1/p43, AIMP2/p38 and EEF1E1/p18. Interacts with QARS1. Part of a complex composed of RARS1, QARS1 and AIMP1.

It localises to the cytoplasm. It is found in the cytosol. The enzyme catalyses tRNA(Arg) + L-arginine + ATP = L-arginyl-tRNA(Arg) + AMP + diphosphate. Forms part of a macromolecular complex that catalyzes the attachment of specific amino acids to cognate tRNAs during protein synthesis. Modulates the secretion of AIMP1 and may be involved in generation of the inflammatory cytokine EMAP2 from AIMP1. This chain is Arginine--tRNA ligase, cytoplasmic (RARS1), found in Cricetulus griseus (Chinese hamster).